The chain runs to 552 residues: Pyrophosphate--fructose 6-phosphate 1-phosphotransferase subunit beta (552 aa).

Glycine 90 contacts diphosphate. Aspartate 184 contacts Mg(2+). Substrate-binding positions include 212-214, 251-252, 259-261, glutamate 320, and 425-428; these read TID, KY, MGR, and YEGR. Aspartate 214 functions as the Proton acceptor in the catalytic mechanism.

It belongs to the phosphofructokinase type A (PFKA) family. PPi-dependent PFK group II subfamily. Clade 'Long' sub-subfamily. Tetramer of two alpha (regulatory) and two beta (catalytic) chains. Requires Mg(2+) as cofactor.

It is found in the cytoplasm. The catalysed reaction is beta-D-fructose 6-phosphate + diphosphate = beta-D-fructose 1,6-bisphosphate + phosphate + H(+). Its pathway is carbohydrate degradation; glycolysis; D-glyceraldehyde 3-phosphate and glycerone phosphate from D-glucose: step 3/4. With respect to regulation, allosterically activated by fructose 2,6-bisphosphate. Functionally, catalytic subunit of pyrophosphate--fructose 6-phosphate 1-phosphotransferase. Catalyzes the phosphorylation of D-fructose 6-phosphate, the first committing step of glycolysis. Uses inorganic phosphate (PPi) as phosphoryl donor instead of ATP like common ATP-dependent phosphofructokinases (ATP-PFKs), which renders the reaction reversible, and can thus function both in glycolysis and gluconeogenesis. The chain is Pyrophosphate--fructose 6-phosphate 1-phosphotransferase subunit beta from Ricinus communis (Castor bean).